The sequence spans 538 residues: Phosphoenolpyruvate carboxykinase (ATP) (538 aa).

Arg-64 is a binding site for substrate. Position 152 (Arg-152) interacts with ATP. Substrate-binding residues include Tyr-205 and Lys-211. Residues Lys-211, His-230, and Gly-246 to Thr-254 contribute to the ATP site. Mn(2+) is bound by residues Lys-211 and His-230. Mn(2+) is bound at residue Asp-267. ATP-binding positions include Glu-295, Arg-331, Arg-344, Arg-447 to Ile-448, and Thr-453. Arg-331 is a binding site for substrate.

The protein belongs to the phosphoenolpyruvate carboxykinase (ATP) family. Monomer. The cofactor is Mn(2+).

It is found in the cytoplasm. The enzyme catalyses oxaloacetate + ATP = phosphoenolpyruvate + ADP + CO2. It functions in the pathway carbohydrate biosynthesis; gluconeogenesis. Functionally, involved in gluconeogenesis. Catalyzes the conversion of oxaloacetate (OAA) to phosphoenolpyruvate (PEP) through direct phosphoryl transfer between the nucleoside triphosphate and OAA. In Actinobacillus succinogenes (strain ATCC 55618 / DSM 22257 / CCUG 43843 / 130Z), this protein is Phosphoenolpyruvate carboxykinase (ATP).